A 292-amino-acid polypeptide reads, in one-letter code: MTITQLKVFVKIAETGSFTKAGQALNMTQPAVSHAISAIEAELDVKLIIRDRRNGLMLTDTGKQILVHIREVLKGIEKVEQVAAAEKGLELGTIHIGTFSTASAYFMPKLISEFKQKYPKLELVLHEGTVNEVKEWLHTRMIDVGILLYPTEEMEYIHLKKDKMAVVLRDDHPLASHSAITLKDLDHEPMIVCDGGYESPFIDMFRQAGATLHPAFTVYNINTSISMIREGLGLAILSEMSMSGMPLPEHVVTRELDPQVYRDVQLAVPSLKEASLAAKLFIEMAKELFGAE.

One can recognise an HTH lysR-type domain in the interval 1–59 (MTITQLKVFVKIAETGSFTKAGQALNMTQPAVSHAISAIEAELDVKLIIRDRRNGLMLT). Positions 18-37 (FTKAGQALNMTQPAVSHAIS) form a DNA-binding region, H-T-H motif.

This sequence belongs to the LysR transcriptional regulatory family.

This is an uncharacterized protein from Bacillus subtilis (strain 168).